Reading from the N-terminus, the 100-residue chain is UPF0213 protein YhbQ (100 aa).

One can recognise a GIY-YIG domain in the interval 2–77; sequence TPWFLYLIRT…KQLTKRQKER (76 aa).

Belongs to the UPF0213 family.

This chain is UPF0213 protein YhbQ, found in Escherichia coli O17:K52:H18 (strain UMN026 / ExPEC).